The following is a 182-amino-acid chain: Isopentenyl-diphosphate Delta-isomerase (182 aa).

Mn(2+)-binding residues include His25 and His32. The 135-residue stretch at 30–164 (LLHLAFSSWL…PWAFSPWMVM (135 aa)) folds into the Nudix hydrolase domain. The active site involves Cys67. His69 provides a ligand contact to Mn(2+). Residue Glu87 coordinates Mg(2+). Mn(2+)-binding residues include Glu114 and Glu116. Glu116 is a catalytic residue.

Belongs to the IPP isomerase type 1 family. In terms of assembly, homodimer. It depends on Mg(2+) as a cofactor. Mn(2+) is required as a cofactor.

It localises to the cytoplasm. It catalyses the reaction isopentenyl diphosphate = dimethylallyl diphosphate. The protein operates within isoprenoid biosynthesis; dimethylallyl diphosphate biosynthesis; dimethylallyl diphosphate from isopentenyl diphosphate: step 1/1. Its function is as follows. Catalyzes the 1,3-allylic rearrangement of the homoallylic substrate isopentenyl (IPP) to its highly electrophilic allylic isomer, dimethylallyl diphosphate (DMAPP). The chain is Isopentenyl-diphosphate Delta-isomerase from Escherichia coli (strain SMS-3-5 / SECEC).